We begin with the raw amino-acid sequence, 553 residues long: Probable malate:quinone oxidoreductase (553 aa).

Residues 524–553 (PPPKIDVNTPSQATGTAPARPAKASADMAL) form a disordered region.

The protein belongs to the MQO family. The cofactor is FAD.

It catalyses the reaction (S)-malate + a quinone = a quinol + oxaloacetate. It participates in carbohydrate metabolism; tricarboxylic acid cycle; oxaloacetate from (S)-malate (quinone route): step 1/1. This Burkholderia lata (strain ATCC 17760 / DSM 23089 / LMG 22485 / NCIMB 9086 / R18194 / 383) protein is Probable malate:quinone oxidoreductase.